A 262-amino-acid polypeptide reads, in one-letter code: Small ribosomal subunit protein eS4C (262 aa).

Residues 42–105 (LPLIVFLRNR…GEHFRLVYDI (64 aa)) enclose the S4 RNA-binding domain. At T194 the chain carries Phosphothreonine.

This sequence belongs to the eukaryotic ribosomal protein eS4 family. Component of the small ribosomal subunit (SSU). Mature yeast ribosomes consist of a small (40S) and a large (60S) subunit. The 40S small subunit contains 1 molecule of ribosomal RNA (18S rRNA) and at least 33 different proteins. The large 60S subunit contains 3 rRNA molecules (25S, 5.8S and 5S rRNA) and at least 46 different proteins.

The protein localises to the cytoplasm. In terms of biological role, component of the ribosome, a large ribonucleoprotein complex responsible for the synthesis of proteins in the cell. The small ribosomal subunit (SSU) binds messenger RNAs (mRNAs) and translates the encoded message by selecting cognate aminoacyl-transfer RNA (tRNA) molecules. The large subunit (LSU) contains the ribosomal catalytic site termed the peptidyl transferase center (PTC), which catalyzes the formation of peptide bonds, thereby polymerizing the amino acids delivered by tRNAs into a polypeptide chain. The nascent polypeptides leave the ribosome through a tunnel in the LSU and interact with protein factors that function in enzymatic processing, targeting, and the membrane insertion of nascent chains at the exit of the ribosomal tunnel. The sequence is that of Small ribosomal subunit protein eS4C (rps403) from Schizosaccharomyces pombe (strain 972 / ATCC 24843) (Fission yeast).